An 891-amino-acid polypeptide reads, in one-letter code: Alanine--tRNA ligase (891 aa).

Zn(2+) is bound by residues His569, His573, Cys671, and His675.

Belongs to the class-II aminoacyl-tRNA synthetase family. As to quaternary structure, homotetramer. It depends on Zn(2+) as a cofactor.

It localises to the cytoplasm. It carries out the reaction tRNA(Ala) + L-alanine + ATP = L-alanyl-tRNA(Ala) + AMP + diphosphate. Its function is as follows. Catalyzes the attachment of alanine to tRNA(Ala) in a two-step reaction: alanine is first activated by ATP to form Ala-AMP and then transferred to the acceptor end of tRNA(Ala). Also edits incorrectly charged Ser-tRNA(Ala) and Gly-tRNA(Ala) via its editing domain. The protein is Alanine--tRNA ligase of Blochmanniella floridana.